The sequence spans 314 residues: tRNA dimethylallyltransferase (314 aa).

6 to 13 provides a ligand contact to ATP; that stretch reads GPTAVGKT. Position 8–13 (8–13) interacts with substrate; the sequence is TAVGKT. Positions 31–34 are interaction with substrate tRNA; the sequence is DSRQ.

This sequence belongs to the IPP transferase family. Monomer. It depends on Mg(2+) as a cofactor.

It catalyses the reaction adenosine(37) in tRNA + dimethylallyl diphosphate = N(6)-dimethylallyladenosine(37) in tRNA + diphosphate. Catalyzes the transfer of a dimethylallyl group onto the adenine at position 37 in tRNAs that read codons beginning with uridine, leading to the formation of N6-(dimethylallyl)adenosine (i(6)A). This chain is tRNA dimethylallyltransferase, found in Pseudothermotoga lettingae (strain ATCC BAA-301 / DSM 14385 / NBRC 107922 / TMO) (Thermotoga lettingae).